A 573-amino-acid polypeptide reads, in one-letter code: Flagellin B (573 aa).

The protein belongs to the bacterial flagellin family. Heteromer of FlaA and FlaB. A flagellar filament composed exclusively of FlaA is indistinguishable in length from that of the wild-type and shows a slight reduction in motility. The flagellar filament composed exclusively of the FlaB is severely truncated in length and greatly reduced in motility. Thus, while both flagellins are not necessary for motility, both are required for a fully active flagellar filament.

The protein localises to the secreted. It localises to the bacterial flagellum. Its function is as follows. Flagellin is the subunit protein which polymerizes to form the filaments of bacterial flagella. This chain is Flagellin B (flaB), found in Campylobacter coli.